The following is a 360-amino-acid chain: Cell division protein DivIB (360 aa).

Residues 1 to 54 form a disordered region; that stretch reads MTEKDSNVEESVLEVEQASQVELDSEQISPAEKESVLAEEKEFSTDVDIPEMTA. Over 1 to 139 the chain is Cytoplasmic; sequence MTEKDSNVEE…VDIPSKVVWK (139 aa). The span at 17-28 shows a compositional bias: polar residues; it reads QASQVELDSEQI. Residues 31–44 show a composition bias toward basic and acidic residues; sequence AEKESVLAEEKEFS. A helical transmembrane segment spans residues 140–160; the sequence is AIPVLVTSLLLAALALYFISP. Topologically, residues 161–360 are extracellular; that stretch reads TSKKKQIEVV…MEVGIYRYAS (200 aa). A POTRA domain is found at 162–233; it reads SKKKQIEVVG…ATFTIHIKEY (72 aa).

Belongs to the FtsQ/DivIB family. DivIB subfamily.

It localises to the cell membrane. In terms of biological role, cell division protein that may be involved in stabilizing or promoting the assembly of the division complex. In Streptococcus suis (strain GZ1), this protein is Cell division protein DivIB.